Reading from the N-terminus, the 986-residue chain is Ephrin type-A receptor 4 (986 aa).

The first 19 residues, 1–19, serve as a signal peptide directing secretion; that stretch reads MAGIFYFALFSCLFGICDA. Topologically, residues 20–547 are extracellular; it reads VTGSRVYPAN…RIIGDGANST (528 aa). In terms of domain architecture, Eph LBD spans 30–209; it reads EVTLLDSRSV…FYKKCPLTVR (180 aa). 3 N-linked (GlcNAc...) asparagine glycosylation sites follow: asparagine 235, asparagine 340, and asparagine 408. Fibronectin type-III domains follow at residues 328–439 and 440–537; these read PPSA…TNQA and APSS…TVPS. Asparagine 545 is a glycosylation site (N-linked (GlcNAc...) asparagine). A helical transmembrane segment spans residues 548–569; that stretch reads VLLVSVSGSVVLVVILIAAFVI. Residues 570 to 986 are Cytoplasmic-facing; it reads SRRRSKYSKA…QQMHGRMVPV (417 aa). Phosphotyrosine; by autocatalysis is present on residues tyrosine 596 and tyrosine 602. Positions 621-882 constitute a Protein kinase domain; the sequence is IKIEKVIGVG…QIVNMLDKLI (262 aa). Residues 627–635 and lysine 653 contribute to the ATP site; that span reads IGVGEFGEV. The active-site Proton acceptor is the aspartate 746. Tyrosine 779 and tyrosine 928 each carry phosphotyrosine; by autocatalysis. An SAM domain is found at 911–975; sequence SAVVSVGDWL…LSSVQAMRTQ (65 aa). Residues 984-986 carry the PDZ-binding motif; it reads VPV.

Belongs to the protein kinase superfamily. Tyr protein kinase family. Ephrin receptor subfamily. Heterotetramer upon binding of the ligand. The heterotetramer is composed of an ephrin dimer and a receptor dimer. Oligomerization is probably required to induce biological responses. Interacts (phosphorylated at position Tyr-602) with FYN. Interacts with CDK5, CDK5R1 and NGEF; upon activation by EFNA1 induces NGEF phosphorylation by the kinase CDK5. Interacts with CHN1; effector of EPHA4 in axon guidance linking EPHA4 activation to RAC1 regulation. Interacts (via PDZ motif) with SIPA1L1 (via PDZ domain); controls neuronal morphology through regulation of the RAP1 (RAP1A or RAP1B) and RAP2 (RAP2A, RAP2B or RAP2C) GTPases. Forms a ternary complex composed of ADAM10, CADH1 and EPHA4; within the complex, CADH1 is cleaved by ADAM10 which disrupts adherens junctions. In terms of tissue distribution, ubiquitous.

The protein resides in the cell membrane. The protein localises to the cell projection. It is found in the axon. Its subcellular location is the dendrite. It localises to the postsynaptic density membrane. The protein resides in the early endosome. The protein localises to the cell junction. It is found in the adherens junction. The enzyme catalyses L-tyrosyl-[protein] + ATP = O-phospho-L-tyrosyl-[protein] + ADP + H(+). Its function is as follows. Receptor tyrosine kinase which binds membrane-bound ephrin family ligands residing on adjacent cells, leading to contact-dependent bidirectional signaling into neighboring cells. The signaling pathway downstream of the receptor is referred to as forward signaling while the signaling pathway downstream of the ephrin ligand is referred to as reverse signaling. Highly promiscuous, it has the unique property among Eph receptors to bind and to be physiologically activated by both GPI-anchored ephrin-A and transmembrane ephrin-B ligands including EFNA1 and EFNB3. Upon activation by ephrin ligands, modulates cell morphology and integrin-dependent cell adhesion through regulation of the Rac, Rap and Rho GTPases activity. Plays an important role in the development of the nervous system controlling different steps of axonal guidance including the establishment of the corticospinal projections. May also control the segregation of motor and sensory axons during neuromuscular circuit development. In addition to its role in axonal guidance plays a role in synaptic plasticity. Activated by EFNA1 phosphorylates CDK5 at 'Tyr-15' which in turn phosphorylates NGEF regulating RHOA and dendritic spine morphogenesis. In the nervous system, also plays a role in repair after injury preventing axonal regeneration and in angiogenesis playing a role in central nervous system vascular formation. Additionally, its promiscuity makes it available to participate in a variety of cell-cell signaling regulating for instance the development of the thymic epithelium. During development of the cochlear organ of Corti, regulates pillar cell separation by forming a ternary complex with ADAM10 and CADH1 which facilitates the cleavage of CADH1 by ADAM10 and disruption of adherens junctions. Phosphorylates CAPRIN1, promoting CAPRIN1-dependent formation of a membraneless compartment. In Homo sapiens (Human), this protein is Ephrin type-A receptor 4 (EPHA4).